The following is a 621-amino-acid chain: UvrABC system protein C (621 aa).

The region spanning threonine 20 to valine 98 is the GIY-YIG domain. Residues aspartate 207–methionine 242 form the UVR domain.

This sequence belongs to the UvrC family. As to quaternary structure, interacts with UvrB in an incision complex.

It is found in the cytoplasm. Functionally, the UvrABC repair system catalyzes the recognition and processing of DNA lesions. UvrC both incises the 5' and 3' sides of the lesion. The N-terminal half is responsible for the 3' incision and the C-terminal half is responsible for the 5' incision. The polypeptide is UvrABC system protein C (Xylella fastidiosa (strain M23)).